We begin with the raw amino-acid sequence, 161 residues long: Protein-export protein SecB (161 aa).

It belongs to the SecB family. Homotetramer, a dimer of dimers. One homotetramer interacts with 1 SecA dimer.

It localises to the cytoplasm. One of the proteins required for the normal export of preproteins out of the cell cytoplasm. It is a molecular chaperone that binds to a subset of precursor proteins, maintaining them in a translocation-competent state. It also specifically binds to its receptor SecA. This Shewanella sp. (strain MR-7) protein is Protein-export protein SecB.